Consider the following 309-residue polypeptide: Homoserine kinase (309 aa).

Residue 91–101 participates in ATP binding; sequence PIGSGLGSSAC.

This sequence belongs to the GHMP kinase family. Homoserine kinase subfamily.

The protein resides in the cytoplasm. It catalyses the reaction L-homoserine + ATP = O-phospho-L-homoserine + ADP + H(+). The protein operates within amino-acid biosynthesis; L-threonine biosynthesis; L-threonine from L-aspartate: step 4/5. Its function is as follows. Catalyzes the ATP-dependent phosphorylation of L-homoserine to L-homoserine phosphate. This chain is Homoserine kinase, found in Yersinia pseudotuberculosis serotype O:1b (strain IP 31758).